We begin with the raw amino-acid sequence, 617 residues long: Prothrombin (617 aa).

An N-terminal signal peptide occupies residues Met-1 to Ser-24. Residues Gln-25–Arg-43 constitute a propeptide that is removed on maturation. Positions Ala-44 to Val-90 constitute a Gla domain. Residues Glu-50, Glu-51, Glu-58, Glu-60, Glu-63, Glu-64, Glu-69, Glu-70, Glu-73, and Glu-76 each carry the 4-carboxyglutamate modification. Cys-61 and Cys-66 are oxidised to a cystine. 10 cysteine pairs are disulfide-bonded: Cys-91–Cys-104, Cys-109–Cys-187, Cys-130–Cys-170, Cys-158–Cys-182, Cys-215–Cys-292, Cys-236–Cys-276, Cys-264–Cys-287, Cys-332–Cys-478, Cys-387–Cys-403, and Cys-532–Cys-546. 2 Kringle domains span residues Cys-109 to Cys-187 and Cys-215 to Cys-292. 2 N-linked (GlcNAc...) asparagine glycosylation sites follow: Asn-120 and Asn-144. The region spanning Ile-360–Asp-614 is the Peptidase S1 domain. The active-site Charge relay system is His-402. Asn-412 is a glycosylation site (N-linked (GlcNAc...) asparagine). Asp-458 acts as the Charge relay system in catalysis. The tract at residues Ala-547–Val-569 is high affinity receptor-binding region which is also known as the TP508 peptide. Asn-552 is a glycosylation site (N-linked (GlcNAc...) asparagine). Residues Cys-560 and Cys-590 are joined by a disulfide bond. The Charge relay system role is filled by Ser-564.

It belongs to the peptidase S1 family. As to quaternary structure, heterodimer (named alpha-thrombin) of a light and a heavy chain; disulfide-linked. Forms a heterodimer with SERPINA5. In plasma, interacts (via N-terminus) with alpha-1-microglobulin; this interaction does not prevent the activation of prothrombin to thrombin. Post-translationally, the gamma-carboxyglutamyl residues, which bind calcium ions, result from the carboxylation of glutamyl residues by a microsomal enzyme, the vitamin K-dependent carboxylase. The modified residues are necessary for the calcium-dependent interaction with a negatively charged phospholipid surface, which is essential for the conversion of prothrombin to thrombin. In terms of processing, in the penultimate step of the coagulation cascade, prothrombin is converted to thrombin by the prothrombinase complex composed of factor Xa (F10), cofactor Va (F5), and phospholipids. This activation requires factor Xa-catalyzed sequential cleavage at 2 sites, Arg-310 and Arg-359, along 2 possible pathways. In the first pathway, the first cleavage occurs at Arg-310, leading to the formation of the inactive intermediate prethrombin-2. This pathway preferentially occurs on platelets and in the absence of cofactor Va. In the second pathway, the first cleavage occurs at Arg-359, which separates protease domain into 2 chains that remain connected through a disulfide bond and generates the active intermediate meizothrombin. The presence of cofactor Va directs activation along the meizothrombin pathway and greatly accelerates the rate of cleavage at Arg-359, but has a smaller effect on the cleavage of meizothrombin at Arg-310. Meizothrombin accumulates as an intermediate when prothrombinase is assembled on the membrane of red blood cells.

It carries out the reaction Selective cleavage of Arg-|-Gly bonds in fibrinogen to form fibrin and release fibrinopeptides A and B.. Activity is promoted in the presence of negatively charged surfaces, such as polyphosphate and dextran sulfate. Inhibited by SERPINA5. Its function is as follows. Thrombin, which cleaves bonds after Arg and Lys, converts fibrinogen to fibrin and activates factors V, VII, VIII, XIII, and, in complex with thrombomodulin, protein C. Functions in blood homeostasis, inflammation and wound healing. Activates coagulation factor XI (F11); activation is promoted by the contact with negatively charged surfaces. Triggers the production of pro-inflammatory cytokines, such as MCP-1/CCL2 and IL8/CXCL8, in endothelial cells. In Rattus norvegicus (Rat), this protein is Prothrombin (F2).